Consider the following 134-residue polypeptide: Transcription antitermination protein NusB (134 aa).

It belongs to the NusB family.

Involved in transcription antitermination. Required for transcription of ribosomal RNA (rRNA) genes. Binds specifically to the boxA antiterminator sequence of the ribosomal RNA (rrn) operons. The sequence is that of Transcription antitermination protein NusB from Shewanella amazonensis (strain ATCC BAA-1098 / SB2B).